A 293-amino-acid chain; its full sequence is 4-hydroxy-tetrahydrodipicolinate synthase (293 aa).

Thr45 serves as a coordination point for pyruvate. Tyr133 acts as the Proton donor/acceptor in catalysis. Lys161 (schiff-base intermediate with substrate) is an active-site residue. Ile204 contacts pyruvate.

The protein belongs to the DapA family. Homotetramer; dimer of dimers.

It localises to the cytoplasm. It catalyses the reaction L-aspartate 4-semialdehyde + pyruvate = (2S,4S)-4-hydroxy-2,3,4,5-tetrahydrodipicolinate + H2O + H(+). Its pathway is amino-acid biosynthesis; L-lysine biosynthesis via DAP pathway; (S)-tetrahydrodipicolinate from L-aspartate: step 3/4. Functionally, catalyzes the condensation of (S)-aspartate-beta-semialdehyde [(S)-ASA] and pyruvate to 4-hydroxy-tetrahydrodipicolinate (HTPA). In Yersinia pseudotuberculosis serotype I (strain IP32953), this protein is 4-hydroxy-tetrahydrodipicolinate synthase.